We begin with the raw amino-acid sequence, 248 residues long: 5'-nucleotidase SurE (248 aa).

A divalent metal cation is bound by residues Asp8, Asp9, Ser39, and Asn91.

The protein belongs to the SurE nucleotidase family. It depends on a divalent metal cation as a cofactor.

Its subcellular location is the cytoplasm. The catalysed reaction is a ribonucleoside 5'-phosphate + H2O = a ribonucleoside + phosphate. Nucleotidase that shows phosphatase activity on nucleoside 5'-monophosphates. This is 5'-nucleotidase SurE from Citrifermentans bemidjiense (strain ATCC BAA-1014 / DSM 16622 / JCM 12645 / Bem) (Geobacter bemidjiensis).